Consider the following 183-residue polypeptide: Acireductone dioxygenase (183 aa).

The Fe(2+) site is built by His99, His101, Glu105, and His144. His99, His101, Glu105, and His144 together coordinate Ni(2+).

Belongs to the acireductone dioxygenase (ARD) family. As to quaternary structure, monomer. Requires Fe(2+) as cofactor. It depends on Ni(2+) as a cofactor.

It catalyses the reaction 1,2-dihydroxy-5-(methylsulfanyl)pent-1-en-3-one + O2 = 3-(methylsulfanyl)propanoate + CO + formate + 2 H(+). The catalysed reaction is 1,2-dihydroxy-5-(methylsulfanyl)pent-1-en-3-one + O2 = 4-methylsulfanyl-2-oxobutanoate + formate + 2 H(+). It functions in the pathway amino-acid biosynthesis; L-methionine biosynthesis via salvage pathway; L-methionine from S-methyl-5-thio-alpha-D-ribose 1-phosphate: step 5/6. Its function is as follows. Catalyzes 2 different reactions between oxygen and the acireductone 1,2-dihydroxy-3-keto-5-methylthiopentene (DHK-MTPene) depending upon the metal bound in the active site. Fe-containing acireductone dioxygenase (Fe-ARD) produces formate and 2-keto-4-methylthiobutyrate (KMTB), the alpha-ketoacid precursor of methionine in the methionine recycle pathway. Ni-containing acireductone dioxygenase (Ni-ARD) produces methylthiopropionate, carbon monoxide and formate, and does not lie on the methionine recycle pathway. This chain is Acireductone dioxygenase, found in Microcystis aeruginosa.